We begin with the raw amino-acid sequence, 328 residues long: Surface antigen CRP170 (328 aa).

2 consecutive repeats follow at residues 38–102 and 103–167; these read NAPC…CKKC.

In Giardia intestinalis (Giardia lamblia), this protein is Surface antigen CRP170.